Reading from the N-terminus, the 351-residue chain is MAFRIASSPFTHNQQRTQRIMLWVILACLPGMLAQVYFFGYGNLIQVGLASATALIAEGVTLSLRKFAVRTTLADNSALLTAVLLGISLPPLAPWWMVVMATVFAIIIAKQLYGGLGQNPFNPAMIGYVVLLISFPVQMTSWLPPEPLQTISLSFHDSLVIIFTGHTPDGHTMQQLMHNVDGVSQATPLDTFKTSLRSGQTPQNILQQPMFAQSLSGIGWQWVNIGFLIGGLFLLMRGTIRWHIPVSFLLSLMFCALLSWIIAPDKFAQPMLHLLSGATMLGAFFIATDPVTASTTNRGRLIFGALIGLLVWLIRTYGGYPDGVAFAVLLANITVPLIDYYTKPRAYGHHR.

Helical transmembrane passes span 20–40, 44–64, 89–109, and 123–143; these read IMLW…YFFG, LIQV…TLSL, LPPL…IIIA, and PAMI…TSWL. Thr-187 bears the FMN phosphoryl threonine mark. The next 5 membrane-spanning stretches (helical) occupy residues 215 to 235, 244 to 264, 267 to 287, 301 to 321, and 322 to 342; these read LSGI…LFLL, IPVS…IIAP, FAQP…FFIA, LIFG…GGYP, and DGVA…DYYT.

Belongs to the NqrB/RnfD family. In terms of assembly, the complex is composed of six subunits: RnfA, RnfB, RnfC, RnfD, RnfE and RnfG. It depends on FMN as a cofactor.

It is found in the cell inner membrane. In terms of biological role, part of a membrane-bound complex that couples electron transfer with translocation of ions across the membrane. In Pectobacterium atrosepticum (strain SCRI 1043 / ATCC BAA-672) (Erwinia carotovora subsp. atroseptica), this protein is Ion-translocating oxidoreductase complex subunit D.